Reading from the N-terminus, the 147-residue chain is Hemoglobin subunit gamma (147 aa).

The Globin domain maps to 3 to 147 (HFTEEDKATI…VASALSSRYH (145 aa)). Heme b is bound by residues His-64 and His-93.

Belongs to the globin family. In terms of assembly, heterotetramer of two alpha chains and two gamma chains in fetal hemoglobin (Hb F). As to expression, red blood cells.

Its function is as follows. Gamma chains make up the fetal hemoglobin F, in combination with alpha chains. This is Hemoglobin subunit gamma (HBG) from Macaca fuscata fuscata (Japanese macaque).